The sequence spans 90 residues: uncharacterized protein (90 aa).

The helical transmembrane segment at V12 to F32 threads the bilayer.

The protein resides in the membrane. This is an uncharacterized protein from Mycoplasma pneumoniae (strain ATCC 29342 / M129 / Subtype 1) (Mycoplasmoides pneumoniae).